A 221-amino-acid chain; its full sequence is 7-cyano-7-deazaguanine synthase (221 aa).

Residue Phe-10–Leu-20 participates in ATP binding. Residues Cys-186, Cys-195, Cys-198, and Cys-201 each coordinate Zn(2+).

The protein belongs to the QueC family. Homodimer. Requires Zn(2+) as cofactor.

It carries out the reaction 7-carboxy-7-deazaguanine + NH4(+) + ATP = 7-cyano-7-deazaguanine + ADP + phosphate + H2O + H(+). Its pathway is purine metabolism; 7-cyano-7-deazaguanine biosynthesis. Its function is as follows. Catalyzes the ATP-dependent conversion of 7-carboxy-7-deazaguanine (CDG) to 7-cyano-7-deazaguanine (preQ(0)). The sequence is that of 7-cyano-7-deazaguanine synthase from Geobacillus kaustophilus (strain HTA426).